Reading from the N-terminus, the 580-residue chain is Mucolipin-1 (580 aa).

The segment at 1-38 is disordered; the sequence is MATPAGRRASETERLLTPNPGYGTQVGTSPAPTTPTEE. Topologically, residues 1–65 are cytoplasmic; it reads MATPAGRRAS…FRAKGRKPCK (65 aa). At Ser-10 the chain carries Phosphoserine. The short motif at 11-16 is the Dileucine motif; mediates targeting to lysosomes element; that stretch reads ETERLL. The segment at 42-62 is interaction with phosphoinositides; the sequence is RRRLKYFFMSPCDKFRAKGRK. The chain crosses the membrane as a helical span at residues 66–86; sequence LMLQVVKILVVTVQLILFGLS. Residues 87–298 lie on the Extracellular side of the membrane; the sequence is NQLVVTFREE…VSRHGDNSFR (212 aa). Residues 107–121 form an extracellular/lumenal pore loop region; sequence LGYSDGSDDTFAAYT. A disulfide bond links Cys-166 and Cys-192. 2 N-linked (GlcNAc...) asparagine glycosylation sites follow: Asn-220 and Asn-230. Cys-253 and Cys-284 form a disulfide bridge. A helical membrane pass occupies residues 299–321; sequence LLFDVVVILTCSLSFLLCARSLL. At 322–350 the chain is on the cytoplasmic side; that stretch reads RGFLLQNEFVVFMWRRRGREISLWERLEF. A helical membrane pass occupies residues 351 to 371; sequence VNGWYILLVTSDVLTISGTVM. Residues 372-382 lie on the Extracellular side of the membrane; the sequence is KIGIEAKNLAS. The chain crosses the membrane as a helical span at residues 383 to 405; the sequence is YDVCSILLGTSTLLVWVGVIRYL. Residues 406–427 lie on the Cytoplasmic side of the membrane; that stretch reads TFFHKYNILIATLRVALPSVMR. The chain crosses the membrane as a helical span at residues 428–448; the sequence is FCCCVAVIYLGYCFCGWIVLG. The Extracellular segment spans residues 449-456; it reads PYHVKFRS. An intramembrane region (pore-forming) is located at residues 457–477; the sequence is LSMVSECLFSLINGDDMFVTF. Residues 469–474 carry the Selectivity filter motif; that stretch reads NGDDMF. The Extracellular segment spans residues 478 to 491; the sequence is AAMQAQQGHSSLVW. A helical transmembrane segment spans residues 492-513; sequence LFSQLYLYSFISLFIYMVLSLF. Residues 514-580 lie on the Cytoplasmic side of the membrane; sequence IALITGAYDT…SPEDHSLLVN (67 aa). At Ser-557 the chain carries Phosphoserine. The residue at position 559 (Ser-559) is a Phosphoserine; by PAK. The required for palmitoylation and association with membranes stretch occupies residues 565–567; sequence CCC. The Dileucine internalization motif; mediates AP2 complex-dependent internalization motif lies at 573-578; sequence EDHSLL.

This sequence belongs to the transient receptor (TC 1.A.4) family. Polycystin subfamily. MCOLN1 sub-subfamily. Homotetramer. Homooligomer. Can heterooligomerize with MCOLN2 or MCOLN3; heteromeric assemblies have different channel properties as compared to the respective homooligomers and may be tissue-specific. Interacts with PDCD6. Interacts with TMEM163. Interacts with LAPTM4B. In terms of processing, palmitoylated; involved in association with membranes. Post-translationally, phosphorylation by PKA inhibits channel activity. Dephosphorylation increases activity. Proteolytically cleaved probably involving multiple lysosomal proteases including cathepsin B; inhibits lysosomal channel activity. In terms of tissue distribution, widely expressed, with the highest expression in brain, liver and kidney.

It is found in the late endosome membrane. Its subcellular location is the lysosome membrane. The protein localises to the cytoplasmic vesicle membrane. The protein resides in the cell projection. It localises to the phagocytic cup. It is found in the cytoplasmic vesicle. Its subcellular location is the phagosome membrane. The protein localises to the cell membrane. It catalyses the reaction Ca(2+)(in) = Ca(2+)(out). The catalysed reaction is Fe(2+)(in) = Fe(2+)(out). The enzyme catalyses Mg(2+)(in) = Mg(2+)(out). It carries out the reaction K(+)(in) = K(+)(out). It catalyses the reaction Na(+)(in) = Na(+)(out). With respect to regulation, channel activity is controlled by multiple regulatory mechanisms in different subcellular compartments. Lower pH by itself has an inhibitory effect on channel conductance. Channel function is transiently modulated by changes in Ca(2+) in a pH-dependent manner; pH changes modify the aggregation state of unitary channels; a negative cooperativity between extracellular/lumenal Ca(2+) and H(+) is suggested. Fe(2+) channel activity is potentiated by low pH. Regulated by phosphoinositides in a compartment-specific manner: in lysosomes activated by PtdIns(3,5)P2 (Phosphatidylinositol 3,5-bisphosphate) and at the plasma membrane inhibited by PtdIns(4,5)P2 (Phosphatidylinositol 4,5-bisphosphate). Its function is as follows. Nonselective cation channel probably playing a role in the regulation of membrane trafficking events and of metal homeostasis. Acts as a Ca(2+)-permeable cation channel with inwardly rectifying activity. Proposed to play a major role in Ca(2+) release from late endosome and lysosome vesicles to the cytoplasm, which is important for many lysosome-dependent cellular events, including the fusion and trafficking of these organelles, exocytosis and autophagy. Required for efficient uptake of large particles in macrophages in which Ca(2+) release from the lysosomes triggers lysosomal exocytosis. May also play a role in phagosome-lysosome fusion. Involved in lactosylceramide trafficking indicative for a role in the regulation of late endocytic membrane fusion/fission events. By mediating lysosomal Ca(2+) release is involved in regulation of mTORC1 signaling and in mTOR/TFEB-dependent lysosomal adaptation to environmental cues such as nutrient levels. Seems to act as lysosomal active oxygen species (ROS) sensor involved in ROS-induced TFEB activation and autophagy. Also functions as a Fe(2+) permeable channel in late endosomes and lysosomes. Also permeable to Mg(2+), Na(+). K(+) and Cs(+). Proposed to play a role in zinc homeostasis probably implicating its association with TMEM163. In adaptive immunity, TRPML2 and TRPML1 may play redundant roles in the function of the specialized lysosomes of B cells. Functionally, may contribute to cellular lipase activity within the late endosomal pathway or at the cell surface which may be involved in processes of membrane reshaping and vesiculation, especially the growth of tubular structures. However, it is not known, whether it conveys the enzymatic activity directly, or merely facilitates the activity of an associated phospholipase. The sequence is that of Mucolipin-1 from Mus musculus (Mouse).